Reading from the N-terminus, the 285-residue chain is Probable enoyl-CoA hydratase echA12 (285 aa).

This sequence belongs to the enoyl-CoA hydratase/isomerase family.

It catalyses the reaction a (3S)-3-hydroxyacyl-CoA = a (2E)-enoyl-CoA + H2O. The catalysed reaction is a 4-saturated-(3S)-3-hydroxyacyl-CoA = a (3E)-enoyl-CoA + H2O. Functionally, could possibly oxidize fatty acids using specific components. The sequence is that of Probable enoyl-CoA hydratase echA12 (echA12) from Mycobacterium bovis (strain ATCC BAA-935 / AF2122/97).